Here is an 891-residue protein sequence, read N- to C-terminus: Dynein axonemal intermediate chain 3 (891 aa).

A compositionally biased stretch (basic residues) spans 1–16 (MAPKQKKKSSRRKKSP). A disordered region spans residues 1–27 (MAPKQKKKSSRRKKSPKPILAASEDME). WD repeat units follow at residues 395 to 435 (ESPD…DRIE), 477 to 533 (GHKR…PLTP), 670 to 709 (IHDG…GPLL), and 713 to 753 (CAPK…HEPA). Positions 817-861 (HLEYVEQRKKIREQEKKEMEQEMAKKKVKIYQKSKEQMEAELKMD) form a coiled coil.

As to quaternary structure, interacts with ACTR2; this interaction reduces binding of the Arp2/3 complex to the VCA domain of nucleation promoting factors. Part of the multisubunit axonemal dynein complex formed at least of two heavy chains and a number of intermediate and light chains. Found in a associated with the catalytic heavy chain DNAH2, the intermediate chain DNAI4, and the light chain DYNLT1.

It is found in the cytoplasm. Acts as a negative regulator of cell migration, invasion, and metastasis downstream of p53/TP53, through inhibition of Arp2/3 complex-mediated actin polymerization. Via its association with the multisubunit axonemal dynein complex, is potentially involved in the regulation of cilia function. May play a role in osteogenesis of dental tissue-derived mesenchymal stem cells. The polypeptide is Dynein axonemal intermediate chain 3 (DNAI3) (Macaca fascicularis (Crab-eating macaque)).